Here is a 141-residue protein sequence, read N- to C-terminus: VLTAEDRRLLQASVGKLGCRLEDIGADALNRLLITFPQSKTYFSHFNLSPGSKDIIHQGEKVGKALDSALKHLDDIRGTLSQLSDLHAYNLRVDPVNFQLLSKCIHVSLATHLRNEYSASVTLAWDKFLELVADVLSEKYR.

The Globin domain maps to 1–141 (VLTAEDRRLL…VADVLSEKYR (141 aa)). Residues His57 and His87 each contribute to the heme b site.

This sequence belongs to the globin family. The deoxy-Hb is a heterotetramer of two alpha and two beta chains, but oxygenation results in dissociation to dimers. Red blood cells.

In terms of biological role, involved in oxygen transport from the lung to the various peripheral tissues. The chain is Hemoglobin subunit alpha-D (HBAD) from Erythrolamprus miliaris (South American water snake).